The sequence spans 450 residues: Na(+)/H(+) antiporter NhaA 1 (450 aa).

Transmembrane regions (helical) follow at residues 35-55, 79-99, 117-137, 143-163, 173-193, 198-218, 224-244, 320-340, 356-376, 392-412, and 423-443; these read SSLF…SDYA, LKHI…GLEI, LIIC…GFNW, IGWG…LTMV, AFIV…IAIF, ISLM…VANY, PLFY…SGVH, LPVV…VVIN, IISG…WFAL, VIGA…IATL, and VAKT…LLYL.

The protein belongs to the NhaA Na(+)/H(+) (TC 2.A.33) antiporter family.

It localises to the cell inner membrane. It catalyses the reaction Na(+)(in) + 2 H(+)(out) = Na(+)(out) + 2 H(+)(in). Its function is as follows. Na(+)/H(+) antiporter that extrudes sodium in exchange for external protons. The sequence is that of Na(+)/H(+) antiporter NhaA 1 from Shewanella denitrificans (strain OS217 / ATCC BAA-1090 / DSM 15013).